The chain runs to 490 residues: Hippocampus abundant transcript 1 protein (490 aa).

An N-acetylmethionine modification is found at methionine 1. Residues 1–40 lie on the Extracellular side of the membrane; the sequence is MTQGKKKKRAANRSIMLAKKIIIKDGGTPQGIGSPSVYHA. N-linked (GlcNAc...) asparagine glycosylation occurs at asparagine 12. Residues 41–61 traverse the membrane as a helical segment; sequence VIVIFLEFFAWGLLTAPTLVV. The Cytoplasmic segment spans residues 62-74; that stretch reads LHETFPKHTFLMN. The helical transmembrane segment at 75-95 threads the bilayer; sequence GLIQGVKGLLSFLSAPLIGAL. Residues 96–103 are Extracellular-facing; sequence SDVWGRKS. Residues 104 to 124 form a helical membrane-spanning segment; that stretch reads FLLLTVFFTCAPIPLMKISPW. Over 125-126 the chain is Cytoplasmic; the sequence is WY. The chain crosses the membrane as a helical span at residues 127-147; the sequence is FAVISVSGVFAVTFSVVFAYV. Topologically, residues 148 to 160 are extracellular; it reads ADITQEHERSMAY. A helical membrane pass occupies residues 161 to 181; sequence GLVSATFAASLVTSPAIGAYL. Residues 182 to 188 lie on the Cytoplasmic side of the membrane; sequence GRVYGDS. Residues 189 to 209 form a helical membrane-spanning segment; that stretch reads LVVVLATAIALLDICFILVAV. The Extracellular portion of the chain corresponds to 210-243; sequence PESLPEKMRPASWGAPISWEQADPFASLKKVGQD. Residues 244–264 form a helical membrane-spanning segment; that stretch reads SIVLLICITVFLSYLPEAGQY. The Cytoplasmic segment spans residues 265 to 284; the sequence is SSFFLYLRQIMKFSPESVAA. A helical transmembrane segment spans residues 285-305; it reads FIAVLGILSIIAQTIVLSLLM. The Extracellular segment spans residues 306-313; it reads RSIGNKNT. Residues 314-334 traverse the membrane as a helical segment; it reads ILLGLGFQILQLAWYGFGSEP. The Cytoplasmic portion of the chain corresponds to 335 to 337; that stretch reads WMM. A helical transmembrane segment spans residues 338–358; the sequence is WAAGAVAAMSSITFPAVSALV. Residues 359 to 379 lie on the Extracellular side of the membrane; it reads SRTADADQQGVVQGMITGIRG. The chain crosses the membrane as a helical span at residues 380 to 400; sequence LCNGLGPALYGFIFYIFHVEL. Over 401 to 427 the chain is Cytoplasmic; sequence KELPITGTDLGTNTSPQHHFEQNSIIP. The helical transmembrane segment at 428-448 threads the bilayer; the sequence is GPPFLFGACSVLLALLVALFI. Residues 449–490 are Extracellular-facing; that stretch reads PEHTNLSLRSSSWRKHCGSHSHPHSTQAPGEAKEPLLQDTNV. An N-linked (GlcNAc...) asparagine glycan is attached at asparagine 453. The interval 466–490 is disordered; that stretch reads GSHSHPHSTQAPGEAKEPLLQDTNV.

This sequence belongs to the major facilitator superfamily. Expressed in various tissues.

The protein resides in the membrane. The polypeptide is Hippocampus abundant transcript 1 protein (Mus musculus (Mouse)).